Here is a 213-residue protein sequence, read N- to C-terminus: MIRLFVGLGNPGPEYEATRHNAGFWWTDALARRWNCQLQPDRSYHGLMARCTQRGTPVWLLQPMTYMNLSGKSVAALARFFKIEPAEILVVHDELDLLPGQMKLKQGGSAAGHNGLKDIQAQLGNPEFWRLRLGIGHPGVKAEVAAYVLRKPPSAEREAIEACIDRSLDAVDRMLGADMPAAMMQMHAKPPRPKPPRPVTAPGAPVPPTEPSA.

Y15 provides a ligand contact to tRNA. Residue H20 is the Proton acceptor of the active site. Positions 66, 68, and 114 each coordinate tRNA. Positions 186–213 (MHAKPPRPKPPRPVTAPGAPVPPTEPSA) are disordered. The segment covering 196 to 213 (PRPVTAPGAPVPPTEPSA) has biased composition (pro residues).

The protein belongs to the PTH family. As to quaternary structure, monomer.

It localises to the cytoplasm. The catalysed reaction is an N-acyl-L-alpha-aminoacyl-tRNA + H2O = an N-acyl-L-amino acid + a tRNA + H(+). Hydrolyzes ribosome-free peptidyl-tRNAs (with 1 or more amino acids incorporated), which drop off the ribosome during protein synthesis, or as a result of ribosome stalling. Its function is as follows. Catalyzes the release of premature peptidyl moieties from peptidyl-tRNA molecules trapped in stalled 50S ribosomal subunits, and thus maintains levels of free tRNAs and 50S ribosomes. The protein is Peptidyl-tRNA hydrolase of Leptothrix cholodnii (strain ATCC 51168 / LMG 8142 / SP-6) (Leptothrix discophora (strain SP-6)).